The primary structure comprises 621 residues: NADPH-dependent diflavin oxidoreductase 1 (621 aa).

The 163-residue stretch at 6–168 (IAVLYGSETG…VYFEFEKRII (163 aa)) folds into the Flavodoxin-like domain. FMN is bound by residues 12-17 (SETGNA), 59-62 (STTG), 106-115 (LGDSSYPKFN), and Glu142. Residues 224–489 (KLIKTGTITL…VGPGVGLAPL (266 aa)) enclose the FAD-binding FR-type domain. Residues Arg381, 411–414 (RLYS), and 443–446 (GVCT) each bind FAD. NADP(+) is bound by residues 536–537 (SR) and 545–549 (TKYVQ). Trp621 provides a ligand contact to FAD.

The protein belongs to the NADPH-dependent diflavin oxidoreductase NDOR1 family. This sequence in the N-terminal section; belongs to the flavodoxin family. In the C-terminal section; belongs to the flavoprotein pyridine nucleotide cytochrome reductase family. In terms of assembly, interacts with DRE2; as part of the cytosolic iron-sulfur (Fe-S) protein assembly (CIA) machinery. The cofactor is FAD. Requires FMN as cofactor.

It is found in the cytoplasm. It localises to the mitochondrion. The catalysed reaction is 2 oxidized [2Fe-2S]-[protein] + NADPH = 2 reduced [2Fe-2S]-[protein] + NADP(+) + H(+). NADPH-dependent reductase which is a central component of the cytosolic iron-sulfur (Fe-S) protein assembly (CIA) machinery. Transfers electrons from NADPH via its FAD and FMN prosthetic groups to the [2Fe-2S] cluster of DRE2, another key component of the CIA machinery. In turn, this reduced cluster provides electrons for assembly of cytosolic iron-sulfur cluster proteins. Positively controls H(2)O(2)-induced cell death. The chain is NADPH-dependent diflavin oxidoreductase 1 from Candida glabrata (strain ATCC 2001 / BCRC 20586 / JCM 3761 / NBRC 0622 / NRRL Y-65 / CBS 138) (Yeast).